The chain runs to 125 residues: Prefoldin subunit beta (125 aa).

The protein belongs to the prefoldin subunit beta family. In terms of assembly, heterohexamer of two alpha and four beta subunits.

The protein localises to the cytoplasm. Molecular chaperone capable of stabilizing a range of proteins. Seems to fulfill an ATP-independent, HSP70-like function in archaeal de novo protein folding. The sequence is that of Prefoldin subunit beta from Sulfolobus acidocaldarius (strain ATCC 33909 / DSM 639 / JCM 8929 / NBRC 15157 / NCIMB 11770).